The chain runs to 214 residues: Cdc42 effector protein 2 (214 aa).

An N-acetylserine modification is found at Ser-2. The 15-residue stretch at 30 to 44 (ISPPLGDFRHTIHIG) folds into the CRIB domain. Ser-31, Ser-101, Ser-137, Ser-141, and Ser-145 each carry phosphoserine. Residues 119–177 (LTLPTAQAPPKPPRLHLESPQPSPQPSPQGAGNVDVWRIPEAGSPHNGMSPEPEAEEPF) form a disordered region.

It belongs to the BORG/CEP family. As to quaternary structure, interacts with CDC42 and RHOQ in a GTP-dependent manner, and with SEPT7.

The protein localises to the endomembrane system. Its subcellular location is the cytoplasm. The protein resides in the cytoskeleton. Functionally, probably involved in the organization of the actin cytoskeleton. May act downstream of CDC42 to induce actin filament assembly leading to cell shape changes. Induces pseudopodia formation in fibroblasts in a CDC42-dependent manner. The polypeptide is Cdc42 effector protein 2 (Cdc42ep2) (Mus musculus (Mouse)).